Consider the following 385-residue polypeptide: 1-deoxy-D-xylulose 5-phosphate reductoisomerase (385 aa).

NADPH contacts are provided by Ser10, Gly11, Ser12, Ile13, Gly36, Asn38, and Asn124. A 1-deoxy-D-xylulose 5-phosphate-binding site is contributed by Lys125. An NADPH-binding site is contributed by Glu126. Asp150 contacts Mn(2+). 1-deoxy-D-xylulose 5-phosphate contacts are provided by Ser151, Glu152, Ser176, and His198. Glu152 lines the Mn(2+) pocket. Residue Gly204 participates in NADPH binding. Positions 211, 216, 217, and 220 each coordinate 1-deoxy-D-xylulose 5-phosphate. Glu220 provides a ligand contact to Mn(2+).

The protein belongs to the DXR family. Mg(2+) is required as a cofactor. It depends on Mn(2+) as a cofactor.

The catalysed reaction is 2-C-methyl-D-erythritol 4-phosphate + NADP(+) = 1-deoxy-D-xylulose 5-phosphate + NADPH + H(+). Its pathway is isoprenoid biosynthesis; isopentenyl diphosphate biosynthesis via DXP pathway; isopentenyl diphosphate from 1-deoxy-D-xylulose 5-phosphate: step 1/6. Functionally, catalyzes the NADPH-dependent rearrangement and reduction of 1-deoxy-D-xylulose-5-phosphate (DXP) to 2-C-methyl-D-erythritol 4-phosphate (MEP). The polypeptide is 1-deoxy-D-xylulose 5-phosphate reductoisomerase (Endomicrobium trichonymphae).